A 283-amino-acid polypeptide reads, in one-letter code: MVSAAAPSLLILLLLLLGSVPATDARSVPLKATFLEDVAGSGEAEGSSASSPSLPPPWTPALSPTSMGPQPITLGGPSPPTNFLDGIVDFFRQYVMLIAVVGSLAFLLMFIVCAAVITRQKQKASAYYPSSFPKKKYVDQSDRAGGPRAFSEVPDRAPDSRPEEALDSSRQLQADILAATQNLKSPTRAALGGGDGARMVEGRGAEEEEKGSQEGDQEVQGHGVPVETPEAQEEPCSGVLEGAVVAGEGQGELEGSLLLAQEAQGPVGPPESPCACSSVHPSV.

The N-terminal stretch at 1–25 (MVSAAAPSLLILLLLLLGSVPATDA) is a signal peptide. Topologically, residues 26-96 (RSVPLKATFL…IVDFFRQYVM (71 aa)) are extracellular. Serine 41 carries an O-linked (Xyl...) (chondroitin sulfate) serine glycan. The segment covering 43–52 (EAEGSSASSP) has biased composition (low complexity). Residues 43 to 76 (EAEGSSASSPSLPPPWTPALSPTSMGPQPITLGG) form a disordered region. A helical transmembrane segment spans residues 97-117 (LIAVVGSLAFLLMFIVCAAVI). At 118–283 (TRQKQKASAY…CACSSVHPSV (166 aa)) the chain is on the cytoplasmic side. 2 disordered regions span residues 136-168 (KYVD…ALDS) and 183-283 (LKSP…HPSV). Composition is skewed to basic and acidic residues over residues 153–164 (VPDRAPDSRPEE) and 198–213 (RMVE…KGSQ). The segment covering 238–264 (GVLEGAVVAGEGQGELEGSLLLAQEAQ) has biased composition (low complexity). Serine 272 is modified (phosphoserine).

In terms of assembly, interacts with SMAD1, SMAD5 and RUNX2. As to expression, expressed in brain microglia (at protein level). Detected in urine (at protein level). Elevated expression levels seen in the brain of patients with Alzheimer disease. Expressed by osteoblast-like cells in bone tissues and follicular dendritic cells in lymphoid tissues.

Its subcellular location is the cell membrane. It is found in the cytoplasm. It localises to the endoplasmic reticulum membrane. The protein localises to the secreted. Functionally, plays an important role in bone formation and normal bone mineralization. Promotes the differentiation of myoblasts into osteoblasts. May induce the commitment and differentiation of myoblasts into osteoblasts through an enhancement of BMP2 production and interaction with the BMP-RUNX2 pathway. Up-regulates the expression of ATF4, a transcription factor which plays a central role in osteoblast differentiation. Essential for normal spermatogenesis and late testicular differentiation. The chain is Transmembrane protein 119 (TMEM119) from Homo sapiens (Human).